The following is a 485-amino-acid chain: Glutamyl-tRNA(Gln) amidotransferase subunit A (485 aa).

Active-site charge relay system residues include K79 and S154. S178 acts as the Acyl-ester intermediate in catalysis.

It belongs to the amidase family. GatA subfamily. As to quaternary structure, heterotrimer of A, B and C subunits.

The catalysed reaction is L-glutamyl-tRNA(Gln) + L-glutamine + ATP + H2O = L-glutaminyl-tRNA(Gln) + L-glutamate + ADP + phosphate + H(+). Allows the formation of correctly charged Gln-tRNA(Gln) through the transamidation of misacylated Glu-tRNA(Gln) in organisms which lack glutaminyl-tRNA synthetase. The reaction takes place in the presence of glutamine and ATP through an activated gamma-phospho-Glu-tRNA(Gln). The chain is Glutamyl-tRNA(Gln) amidotransferase subunit A from Staphylococcus aureus (strain MRSA252).